Here is a 408-residue protein sequence, read N- to C-terminus: Putative transporter AmpG 2 (408 aa).

12 helical membrane-spanning segments follow: residues 11–31 (IFNILFILIISFPGGLIYLLT), 49–69 (IGLFGLVNFIYILKFLWGPLL), 84–104 (YCLVITLINCIVCVYVLTSFN), 110–130 (TPFVLCLIVLAFFSSIYDMLI), 154–174 (FRIGILISGSGALYLSTIISW), 177–197 (VYRTMAILCIPSLLLIIFYPL), 224–244 (WIVIISFMLLYRLQDSFLSIM), 261–281 (IGYKAFGMCAAIFGGVIGGFL), 294–311 (VLIYHALSSLSFIYLYFL), 315–337 (IISLYIAVFCQEFTKGLTMSPFF), 353–373 (IALITSITNVGTILIGSISGY), and 382–402 (YFFIVAGLCFIPAYILILYLP).

It belongs to the major facilitator superfamily.

Its subcellular location is the cell inner membrane. This Rickettsia typhi (strain ATCC VR-144 / Wilmington) protein is Putative transporter AmpG 2 (ampG2).